A 481-amino-acid polypeptide reads, in one-letter code: Alginate biosynthesis protein AlgA (481 aa).

This sequence belongs to the mannose-6-phosphate isomerase type 2 family. In terms of assembly, monomer. It depends on Co(2+) as a cofactor.

The catalysed reaction is D-mannose 6-phosphate = D-fructose 6-phosphate. The enzyme catalyses alpha-D-mannose 1-phosphate + GTP + H(+) = GDP-alpha-D-mannose + diphosphate. The protein operates within nucleotide-sugar biosynthesis; GDP-alpha-D-mannose biosynthesis; GDP-alpha-D-mannose from alpha-D-mannose 1-phosphate (GTP route): step 1/1. Its pathway is nucleotide-sugar biosynthesis; GDP-alpha-D-mannose biosynthesis; alpha-D-mannose 1-phosphate from D-fructose 6-phosphate: step 1/2. In terms of biological role, produces a precursor for alginate polymerization. The alginate layer provides a protective barrier against host immune defenses and antibiotics. The chain is Alginate biosynthesis protein AlgA (algA) from Pseudomonas aeruginosa (strain ATCC 15692 / DSM 22644 / CIP 104116 / JCM 14847 / LMG 12228 / 1C / PRS 101 / PAO1).